The chain runs to 2363 residues: Spectrin beta chain, non-erythrocytic 1 (2363 aa).

An N-acetylthreonine modification is found at T2. The actin-binding stretch occupies residues 2-275; the sequence is TTTVATDYDN…IITYVVTYYH (274 aa). Phosphoserine occurs at positions 14 and 36. 2 Calponin-homology (CH) domains span residues 54-158 and 173-278; these read AVQK…LRFQ and KSAK…HYFS. K90 carries the post-translational modification N6-acetyllysine. S228 is modified (phosphoserine). Spectrin repeat units follow at residues 303–411, 423–525, 530–636, 639–742, 745–847, 850–952, 957–1060, 1063–1166, 1170–1259, 1276–1376, 1381–1482, 1486–1590, 1592–1696, 1698–1801, and 1805–1907; these read MIEK…LALR, LARR…QRLE, LQKI…RLEE, RLWK…RLEE, LLHQ…ALQD, ALYK…DALL, IQNY…SLGE, KLQQ…NLLS, AYQQ…RHRK, DLQK…AQRL, KAEL…HNLL, EIHQ…RLEE, HKAQ…KLDE, HRLF…TQIL, and YELH…RVRL. S817, S903, S1057, S1076, S1079, and S1237 each carry phosphoserine. Residues S1388, S1447, and S1557 each carry the phosphoserine modification. Positions 1563–2093 are interaction with ANK2; the sequence is IRQRLADLKQ…LLEVRRQQEE (531 aa). Y1805 is subject to Phosphotyrosine. K1815, K1913, and K1989 each carry N6-acetyllysine. Spectrin repeat units follow at residues 1914-2014 and 2018-2097; these read FRFF…EWLR and EVHQ…EERK. The tract at residues 2089 to 2193 is disordered; that stretch reads RQQEEEERKR…AATLPARTLE (105 aa). Phosphoserine is present on residues S2102, S2127, and S2137. The span at 2115 to 2130 shows a compositional bias: polar residues; that stretch reads SQQWDTSKGDQVSQNG. T2146 bears the Phosphothreonine mark. S2147 bears the Phosphoserine mark. The segment at 2148–2176 is mediates interaction with CAMSAP1; that stretch reads EMVNGAAEQRTSSKESSPVPSPTLDRKAK. Position 2158 is a phosphothreonine (T2158). A phosphoserine mark is found at S2159, S2160, S2163, S2164, and S2168. T2170 is modified (phosphothreonine). Residue S2183 is modified to Phosphoserine. Phosphothreonine is present on residues T2186 and T2194. The PH domain maps to 2196-2306; sequence AAQMEGFLNR…WIQAISSAIS (111 aa). The disordered stretch occupies residues 2308-2363; sequence DKHDTSASTQSTPASSRAQTLPTSVVTITSESSPGKREKDKEKDKEKRFSLFGKKK. Phosphoserine is present on residues S2313 and S2318. The span at 2313–2327 shows a compositional bias: low complexity; that stretch reads SASTQSTPASSRAQT. T2319 bears the Phosphothreonine mark. S2323 carries an O-linked (GlcNAc) serine glycan. Phosphothreonine is present on T2327. Residues 2328-2340 show a composition bias toward polar residues; it reads LPTSVVTITSESS. Phosphoserine is present on residues S2339 and S2340. Over residues 2341-2356 the composition is skewed to basic and acidic residues; that stretch reads PGKREKDKEKDKEKRF.

This sequence belongs to the spectrin family. In terms of assembly, interacts with ANK2. Interacts with CPNE4 (via VWFA domain). Like erythrocyte spectrin, the spectrin-like proteins are capable to form dimers which can further associate to tetramers. Interacts with CAMSAP1. Can form heterodimers with SPTAN1. As to expression, isoform 2 is present in brain, heart, kidney and liver (at protein level).

The protein resides in the cytoplasm. It is found in the cytoskeleton. Its subcellular location is the endomembrane system. It localises to the myofibril. The protein localises to the sarcomere. The protein resides in the m line. It is found in the cytosol. Its subcellular location is the cell membrane. In terms of biological role, fodrin, which seems to be involved in secretion, interacts with calmodulin in a calcium-dependent manner and is thus candidate for the calcium-dependent movement of the cytoskeleton at the membrane. Plays a critical role in central nervous system development and function. In Mus musculus (Mouse), this protein is Spectrin beta chain, non-erythrocytic 1 (Sptbn1).